The following is a 370-amino-acid chain: Flagellar P-ring protein (370 aa).

The signal sequence occupies residues 1-27 (MPARPIPVPLLALALAAALAVPSPAAA).

This sequence belongs to the FlgI family. In terms of assembly, the basal body constitutes a major portion of the flagellar organelle and consists of four rings (L,P,S, and M) mounted on a central rod.

The protein resides in the periplasm. It is found in the bacterial flagellum basal body. Functionally, assembles around the rod to form the L-ring and probably protects the motor/basal body from shearing forces during rotation. The sequence is that of Flagellar P-ring protein from Anaeromyxobacter sp. (strain K).